Here is a 413-residue protein sequence, read N- to C-terminus: Acetate kinase (413 aa).

A Mg(2+)-binding site is contributed by N7. K14 lines the ATP pocket. R98 contacts substrate. The active-site Proton donor/acceptor is the D157. Residues 216 to 220 (HIGNG), 291 to 293 (DLR), and 339 to 343 (GVGEN) contribute to the ATP site. E392 is a Mg(2+) binding site.

Belongs to the acetokinase family. Homodimer. Mg(2+) is required as a cofactor. The cofactor is Mn(2+).

The protein localises to the cytoplasm. It carries out the reaction acetate + ATP = acetyl phosphate + ADP. It functions in the pathway metabolic intermediate biosynthesis; acetyl-CoA biosynthesis; acetyl-CoA from acetate: step 1/2. Catalyzes the formation of acetyl phosphate from acetate and ATP. Can also catalyze the reverse reaction. The chain is Acetate kinase from Synechocystis sp. (strain ATCC 27184 / PCC 6803 / Kazusa).